A 337-amino-acid chain; its full sequence is Fructose-1,6-bisphosphatase class 1 (337 aa).

Glutamate 94, aspartate 116, leucine 118, and aspartate 119 together coordinate Mg(2+). Substrate is bound by residues 119-122 (DGSS), asparagine 210, and lysine 276. Glutamate 282 serves as a coordination point for Mg(2+).

This sequence belongs to the FBPase class 1 family. As to quaternary structure, homotetramer. Mg(2+) serves as cofactor.

The protein resides in the cytoplasm. The catalysed reaction is beta-D-fructose 1,6-bisphosphate + H2O = beta-D-fructose 6-phosphate + phosphate. Its pathway is carbohydrate biosynthesis; gluconeogenesis. This Burkholderia multivorans (strain ATCC 17616 / 249) protein is Fructose-1,6-bisphosphatase class 1.